A 511-amino-acid chain; its full sequence is Glucans biosynthesis protein G (511 aa).

Positions 1-22 are cleaved as a signal peptide; sequence MMKMRWLSAAVMLTLYTSSSWA.

It belongs to the OpgD/OpgG family.

It localises to the periplasm. The protein operates within glycan metabolism; osmoregulated periplasmic glucan (OPG) biosynthesis. Involved in the biosynthesis of osmoregulated periplasmic glucans (OPGs). This Escherichia coli (strain K12 / MC4100 / BW2952) protein is Glucans biosynthesis protein G.